The sequence spans 390 residues: F-box/kelch-repeat protein At3g06570 (390 aa).

Positions 23–69 (SASFQSLPDDLILSIVARVPRLYHRTVSLVCKSFRSLLVSPELYKAR) constitute an F-box domain. Kelch repeat units lie at residues 140 to 183 (DIYN…VLDR), 185 to 234 (IFVV…CRTA), and 236 to 281 (IDGK…QIHN).

The sequence is that of F-box/kelch-repeat protein At3g06570 from Arabidopsis thaliana (Mouse-ear cress).